Here is a 237-residue protein sequence, read N- to C-terminus: Uridylate kinase (237 aa).

12–15 is an ATP binding site; it reads KLSG. Residues 20–25 are involved in allosteric activation by GTP; the sequence is GDEGFG. A UMP-binding site is contributed by Gly54. ATP contacts are provided by Gly55 and Arg59. UMP-binding positions include Asp74 and 135 to 142; that span reads TGSPFFTT. Residues Thr162, Tyr168, and Asp171 each coordinate ATP.

It belongs to the UMP kinase family. Homohexamer.

It localises to the cytoplasm. It catalyses the reaction UMP + ATP = UDP + ADP. Its pathway is pyrimidine metabolism; CTP biosynthesis via de novo pathway; UDP from UMP (UMPK route): step 1/1. Allosterically activated by GTP. Inhibited by UTP. Functionally, catalyzes the reversible phosphorylation of UMP to UDP. The sequence is that of Uridylate kinase from Haemophilus ducreyi (strain 35000HP / ATCC 700724).